The sequence spans 701 residues: UvrABC system protein B (701 aa).

A Helicase ATP-binding domain is found at 35–422; sequence RRIQGGAADT…GGDVVEQVIR (388 aa). 48–55 is an ATP binding site; the sequence is GATGTGKT. Residues 101–124 carry the Beta-hairpin motif; that stretch reads YYDYYQPEAYVPQTDTYIEKDSSI. The 167-residue stretch at 439 to 605 folds into the Helicase C-terminal domain; sequence QIDDLVHEIR…PLRKKIADIL (167 aa). Residues 620–648 form a disordered region; it reads ARSRGEKRGTPTPRSGALSGPDRVAEQAK. The region spanning 656-691 is the UVR domain; that stretch reads AALVEQLTEQMHQAAADLQFELAARLRDEIKELKRE.

It belongs to the UvrB family. Forms a heterotetramer with UvrA during the search for lesions. Interacts with UvrC in an incision complex.

It localises to the cytoplasm. Its function is as follows. The UvrABC repair system catalyzes the recognition and processing of DNA lesions. A damage recognition complex composed of 2 UvrA and 2 UvrB subunits scans DNA for abnormalities. Upon binding of the UvrA(2)B(2) complex to a putative damaged site, the DNA wraps around one UvrB monomer. DNA wrap is dependent on ATP binding by UvrB and probably causes local melting of the DNA helix, facilitating insertion of UvrB beta-hairpin between the DNA strands. Then UvrB probes one DNA strand for the presence of a lesion. If a lesion is found the UvrA subunits dissociate and the UvrB-DNA preincision complex is formed. This complex is subsequently bound by UvrC and the second UvrB is released. If no lesion is found, the DNA wraps around the other UvrB subunit that will check the other stand for damage. The sequence is that of UvrABC system protein B from Thermobifida fusca (strain YX).